A 137-amino-acid chain; its full sequence is Small ribosomal subunit protein uS11 (137 aa).

Disordered stretches follow at residues 1-32 (MPPK…AHIK) and 118-137 (ISDV…RRRV). A compositionally biased stretch (basic residues) spans 12 to 21 (KTQKSRRRDK).

It belongs to the universal ribosomal protein uS11 family. In terms of assembly, part of the 30S ribosomal subunit. Interacts with proteins S7 and S18. Binds to IF-3.

In terms of biological role, located on the platform of the 30S subunit, it bridges several disparate RNA helices of the 16S rRNA. Forms part of the Shine-Dalgarno cleft in the 70S ribosome. This is Small ribosomal subunit protein uS11 from Nocardia farcinica (strain IFM 10152).